The chain runs to 222 residues: Fibrillarin-like rRNA/tRNA 2'-O-methyltransferase (222 aa).

S-adenosyl-L-methionine-binding positions include 86-87, 104-105, 129-130, and 149-152; these read TT, EV, DA, and DISQ.

Belongs to the methyltransferase superfamily. Fibrillarin family. In terms of assembly, interacts with nop5. Component of box C/D small ribonucleoprotein (sRNP) particles that contain rpl7ae, FlpA and nop5, plus a guide RNA.

In terms of biological role, involved in pre-rRNA and tRNA processing. Utilizes the methyl donor S-adenosyl-L-methionine to catalyze the site-specific 2'-hydroxyl methylation of ribose moieties in rRNA and tRNA. Site specificity is provided by a guide RNA that base pairs with the substrate. Methylation occurs at a characteristic distance from the sequence involved in base pairing with the guide RNA. The polypeptide is Fibrillarin-like rRNA/tRNA 2'-O-methyltransferase (Thermoplasma volcanium (strain ATCC 51530 / DSM 4299 / JCM 9571 / NBRC 15438 / GSS1)).